Consider the following 624-residue polypeptide: DNA-directed RNA polymerase subunit gamma (624 aa).

Zn(2+) is bound by residues Cys70, Cys72, Cys85, and Cys88. Mg(2+)-binding residues include Asp466, Asp468, and Asp470.

Belongs to the RNA polymerase beta' chain family. RpoC1 subfamily. In terms of assembly, in cyanobacteria the RNAP catalytic core is composed of 2 alpha, 1 beta, 1 beta', 1 gamma and 1 omega subunit. When a sigma factor is associated with the core the holoenzyme is formed, which can initiate transcription. It depends on Mg(2+) as a cofactor. Zn(2+) is required as a cofactor.

The catalysed reaction is RNA(n) + a ribonucleoside 5'-triphosphate = RNA(n+1) + diphosphate. Its function is as follows. DNA-dependent RNA polymerase catalyzes the transcription of DNA into RNA using the four ribonucleoside triphosphates as substrates. This is DNA-directed RNA polymerase subunit gamma from Synechococcus sp. (strain ATCC 27144 / PCC 6301 / SAUG 1402/1) (Anacystis nidulans).